Reading from the N-terminus, the 1035-residue chain is Eukaryotic translation initiation factor 3 subunit A (1035 aa).

Residues 92 to 121 (LKKFIELAEKKVTEAQAKADEIQSSLESAA) are a coiled coil. The 185-residue stretch at 339 to 523 (MTKAASFVLL…GVLTFDTDVF (185 aa)) folds into the PCI domain. A coiled-coil region spans residues 606–910 (ERRVIIEKKK…LRAKRAGLSE (305 aa)). Basic and acidic residues-rich tracts occupy residues 619–632 (TDALQRKQKEEETR) and 809–901 (KAAE…EARL). Disordered stretches follow at residues 619–649 (TDALQRKQKEEETRKRIRTQQLQEAEKQRLA) and 809–1035 (KAAE…QQNQ). 2 stretches are compositionally biased toward low complexity: residues 943–953 (KEAAGGAAPEA) and 988–1004 (PPSQRSSQPPSRTQTPP).

It belongs to the eIF-3 subunit A family. Component of the eukaryotic translation initiation factor 3 (eIF-3) complex.

It is found in the cytoplasm. RNA-binding component of the eukaryotic translation initiation factor 3 (eIF-3) complex, which is involved in protein synthesis of a specialized repertoire of mRNAs and, together with other initiation factors, stimulates binding of mRNA and methionyl-tRNAi to the 40S ribosome. The eIF-3 complex specifically targets and initiates translation of a subset of mRNAs involved in cell proliferation. This is Eukaryotic translation initiation factor 3 subunit A (tif32) from Emericella nidulans (strain FGSC A4 / ATCC 38163 / CBS 112.46 / NRRL 194 / M139) (Aspergillus nidulans).